The primary structure comprises 427 residues: Pectin acetylesterase 5 (427 aa).

An N-terminal signal peptide occupies residues 1-35 (MAIPRFSSLLRCRKWAKSDWLVASIGCVLIVFFLS). Asn-173 carries an N-linked (GlcNAc...) asparagine glycan. Catalysis depends on charge relay system residues Ser-209, Asp-305, and His-372. N-linked (GlcNAc...) asparagine glycosylation is present at Asn-391.

This sequence belongs to the pectinacetylesterase family.

It is found in the secreted. The protein localises to the cell wall. In terms of biological role, hydrolyzes acetyl esters in homogalacturonan regions of pectin. In type I primary cell wall, galacturonic acid residues of pectin can be acetylated at the O-2 and O-3 positions. Decreasing the degree of acetylation of pectin gels in vitro alters their physical properties. The chain is Pectin acetylesterase 5 from Arabidopsis thaliana (Mouse-ear cress).